A 391-amino-acid chain; its full sequence is Choline/ethanolaminephosphotransferase 1 (391 aa).

The Lumenal segment spans residues 1–49 (MGYFVPDSHIENLKSYKYQSEDRSLVSKYFLKPFWQRFCHIFPTWMAPN). The chain crosses the membrane as a helical span at residues 50–69 (IITLSGFAFIVINVLTVFYY). Over 70 to 172 (DPNLNTDTPR…YHTHTLYLSE (103 aa)) the chain is Cytoplasmic. The chain crosses the membrane as a helical span at residues 173-193 (FSGPVEGILIVCVSLILTGIY). Residues 194–211 (GKQVIWHTYLFTITVGDK) lie on the Lumenal side of the membrane. A helical membrane pass occupies residues 212–232 (VIDVDTLDIVFSLAVFGLVMN). At 233 to 264 (ALSAKRNVDKYYRNSTSSANNITQIEQDSAIK) the chain is on the cytoplasmic side. The chain crosses the membrane as a helical span at residues 265–282 (GLLPFFAYYASIALLVWM). The Lumenal portion of the chain corresponds to 283 to 285 (QPS). The chain crosses the membrane as a helical span at residues 286–308 (FITLSFILSVGFTGAFTVGRIIV). Topologically, residues 309–321 (CHLTKQSFPMFNA) are cytoplasmic. The helical transmembrane segment at 322–342 (PMLIPLCQIVLYKICLSLWGI) threads the bilayer. Over 343 to 346 (ESNK) the chain is Lumenal. Residues 347–367 (IVFALSWLGFGLSLGVHIMFM) form a helical membrane-spanning segment. The Cytoplasmic segment spans residues 368–391 (NDIIHEFTEYLDVYALSIKRSKLT).

Belongs to the CDP-alcohol phosphatidyltransferase class-I family. Requires Mg(2+) as cofactor.

It localises to the golgi apparatus membrane. The enzyme catalyses CDP-ethanolamine + a 1,2-diacyl-sn-glycerol = a 1,2-diacyl-sn-glycero-3-phosphoethanolamine + CMP + H(+). The catalysed reaction is CDP-choline + a 1,2-diacyl-sn-glycerol = a 1,2-diacyl-sn-glycero-3-phosphocholine + CMP + H(+). It catalyses the reaction CDP-N-methylethanolamine + a 1,2-diacyl-sn-glycerol = a 1,2-diacyl-sn-glycero-3-phospho-N-methylethanolamine + CMP + H(+). It carries out the reaction CDP-N,N-dimethylethanolamine + a 1,2-diacyl-sn-glycerol = a 1,2-diacyl-sn-glycero-3-phospho-N,N-dimethylethanolamine + CMP + H(+). The enzyme catalyses 1,2-di-(9Z-octadecenoyl)-glycerol + CDP-choline = 1,2-di-(9Z-octadecenoyl)-sn-glycero-3-phosphocholine + CMP + H(+). The catalysed reaction is 1,2-di-(9Z-octadecenoyl)-glycerol + CDP-ethanolamine = 1,2-di-(9Z-octadecenoyl)-sn-glycero-3-phosphoethanolamine + CMP + H(+). It functions in the pathway phospholipid metabolism; phosphatidylethanolamine biosynthesis; phosphatidylethanolamine from ethanolamine: step 3/3. It participates in phospholipid metabolism; phosphatidylcholine biosynthesis; phosphatidylcholine from phosphocholine: step 2/2. Its activity is regulated as follows. Requires a divalent cation activator, and is inhibited by CMP. Activated by phospholipids, especially phosphatidylcholine. In terms of biological role, catalyzes the final step in the CDP-ethanolamine route leading to phosphatidylethanolamine (PE). Can also catalyze the formation of phosphatidylcholine (PC) from CDP-choline, but does not substantially contribute to PC biosynthesis. Preferentially uses CDP-dimethylethanolamine and CDP-propanolamine as aminoalcohol substrates. Shows highest activity toward di-unsaturated diacylglycerol species as lipid substrates. The CDP-ethanolamine pathway may play a role in maintaining the proper PE species distribution. The chain is Choline/ethanolaminephosphotransferase 1 (EPT1) from Saccharomyces cerevisiae (strain ATCC 204508 / S288c) (Baker's yeast).